Here is a 361-residue protein sequence, read N- to C-terminus: Ribosomal RNA large subunit methyltransferase M (361 aa).

Residues serine 187, 220–223 (CPGG), aspartate 239, aspartate 259, and aspartate 276 contribute to the S-adenosyl-L-methionine site. Catalysis depends on lysine 305, which acts as the Proton acceptor.

Belongs to the class I-like SAM-binding methyltransferase superfamily. RNA methyltransferase RlmE family. RlmM subfamily. As to quaternary structure, monomer.

The protein resides in the cytoplasm. It carries out the reaction cytidine(2498) in 23S rRNA + S-adenosyl-L-methionine = 2'-O-methylcytidine(2498) in 23S rRNA + S-adenosyl-L-homocysteine + H(+). In terms of biological role, catalyzes the 2'-O-methylation at nucleotide C2498 in 23S rRNA. This is Ribosomal RNA large subunit methyltransferase M from Shewanella baltica (strain OS185).